Here is a 208-residue protein sequence, read N- to C-terminus: Thymidylate kinase (208 aa).

ATP is bound at residue 10–17 (GIDGCGKT).

This sequence belongs to the thymidylate kinase family.

It carries out the reaction dTMP + ATP = dTDP + ADP. Its function is as follows. Phosphorylation of dTMP to form dTDP in both de novo and salvage pathways of dTTP synthesis. The sequence is that of Thymidylate kinase from Caldanaerobacter subterraneus subsp. tengcongensis (strain DSM 15242 / JCM 11007 / NBRC 100824 / MB4) (Thermoanaerobacter tengcongensis).